The sequence spans 124 residues: MSTPNPETTAQRLIVNDIRPLSIETEIISLTKDIITHTFIYLINHECIVRKLDERQATFTFLVNYEMKLLHKVGSTKYNKYTEYNRKYGTLPMPIFINHDGFLECIGIKPTRHTPIIYKYDLNP.

The short motif at 121 to 124 (DLNP) is the DLNP; interaction with MAP1B element.

The protein belongs to the pneumovirus non-structural protein 2 family. Monomer (instable). Homomultimer. Heteromultimer with NS1. Interacts with host RIGI (via N-terminus); this interaction prevents host signaling pathway involved in interferon production. Interacts with host MAP1B/microtubule-associated protein 1B.

It localises to the host mitochondrion. In terms of biological role, plays a major role in antagonizing the type I IFN-mediated antiviral response. Acts cooperatively with NS1 to repress activation and nuclear translocation of host IFN-regulatory factor IRF3. Interacts with the host cytoplasmic sensor of viral nucleic acids RIGI and prevents the interaction with its downstream partner MAVS. Together with NS2, participates in the proteasomal degradation of host STAT2, IRF3, IRF7, TBK1 and RIGI through a NS-degradasome involving CUL2 and Elongin-C. The degradasome requires an intact mitochondrial MAVS. Induces host SOCS1 expression. Induces activation of NF-kappa-B. Suppresses premature apoptosis by an NF-kappa-B-dependent, interferon-independent mechanism promoting continued viral replication. The protein is Non-structural protein 2 (1B) of Bos taurus (Bovine).